Reading from the N-terminus, the 644-residue chain is Tripeptidyl-peptidase sed1 (644 aa).

The first 18 residues, 1 to 18, serve as a signal peptide directing secretion; it reads MRLSHVLLGTAAAAGVLA. The propeptide at 19–196 is removed in mature form; it reads SPTPNDYVVH…KARSIEKRSF (178 aa). A Peptidase S53 domain is found at 224–643; sequence AITPLCISAL…PALLDLFMSL (420 aa). Asn235 carries N-linked (GlcNAc...) asparagine glycosylation. Catalysis depends on charge relay system residues Glu300 and Asp304. 3 N-linked (GlcNAc...) asparagine glycosylation sites follow: Asn326, Asn332, and Asn519. The active-site Charge relay system is Ser561. Positions 602, 603, 621, and 623 each coordinate Ca(2+).

Ca(2+) serves as cofactor. N-glycosylated.

The protein localises to the secreted. It localises to the extracellular space. The enzyme catalyses Release of an N-terminal tripeptide from a polypeptide.. Its function is as follows. Secreted tripeptidyl-peptidase which degrades proteins at acidic pHs and is involved in virulence. The sequence is that of Tripeptidyl-peptidase sed1 (sed1) from Aspergillus fumigatus (strain ATCC MYA-4609 / CBS 101355 / FGSC A1100 / Af293) (Neosartorya fumigata).